The primary structure comprises 503 residues: Probable cytosol aminopeptidase (503 aa).

Mn(2+) contacts are provided by lysine 270 and aspartate 275. The active site involves lysine 282. The Mn(2+) site is built by aspartate 293, aspartate 352, and glutamate 354. The active site involves arginine 356.

Belongs to the peptidase M17 family. The cofactor is Mn(2+).

It localises to the cytoplasm. It catalyses the reaction Release of an N-terminal amino acid, Xaa-|-Yaa-, in which Xaa is preferably Leu, but may be other amino acids including Pro although not Arg or Lys, and Yaa may be Pro. Amino acid amides and methyl esters are also readily hydrolyzed, but rates on arylamides are exceedingly low.. The catalysed reaction is Release of an N-terminal amino acid, preferentially leucine, but not glutamic or aspartic acids.. Functionally, presumably involved in the processing and regular turnover of intracellular proteins. Catalyzes the removal of unsubstituted N-terminal amino acids from various peptides. This Shigella flexneri protein is Probable cytosol aminopeptidase.